A 919-amino-acid polypeptide reads, in one-letter code: Isoleucine--tRNA ligase (919 aa).

The 'HIGH' region motif lies at Pro57 to His67. Glu569 contributes to the L-isoleucyl-5'-AMP binding site. The short motif at Lys610–Ser614 is the 'KMSKS' region element. Lys613 contacts ATP. The Zn(2+) site is built by Cys896, Cys899, Cys911, and Cys914.

Belongs to the class-I aminoacyl-tRNA synthetase family. IleS type 1 subfamily. As to quaternary structure, monomer. Zn(2+) serves as cofactor.

The protein localises to the cytoplasm. The catalysed reaction is tRNA(Ile) + L-isoleucine + ATP = L-isoleucyl-tRNA(Ile) + AMP + diphosphate. Catalyzes the attachment of isoleucine to tRNA(Ile). As IleRS can inadvertently accommodate and process structurally similar amino acids such as valine, to avoid such errors it has two additional distinct tRNA(Ile)-dependent editing activities. One activity is designated as 'pretransfer' editing and involves the hydrolysis of activated Val-AMP. The other activity is designated 'posttransfer' editing and involves deacylation of mischarged Val-tRNA(Ile). In Aliarcobacter butzleri (strain RM4018) (Arcobacter butzleri), this protein is Isoleucine--tRNA ligase.